Reading from the N-terminus, the 357-residue chain is MEIIEIDGSMGEGGGQILRYSLGFSAVTLKPVRIYNIRAKRSNPGLRPQHLTAVKALQMITDAVVKGAKVGSMEIYFEPKRRKPGNYRFNIGTAGSTTLVIQAILPALLFSKGYSSVEIIGGTDVPWSPPIDYMRYVFIYNLRFFGVDVEIELYRRGHYPRGGGRVVLKVKPLLGKMKPINIVERGKLISIYGISHAVRLPRHVAERQARSAATVIREKLGVEPNILIESYPPGRDPHLGPGSGIVLYADVEAGTRLGGDALGARGKRAEIVGREAAEKLIDELSSGMAFDSHMGDMLIPYMFLAGGESIAGVSKLTNHTLTAIEVSKIFLPNSKVSIVGNKGEKGIIRIHGVGLSP.

Residues glutamine 102 and 293 to 296 (HMGD) contribute to the ATP site. Histidine 319 (tele-AMP-histidine intermediate) is an active-site residue.

Belongs to the RNA 3'-terminal cyclase family. Type 1 subfamily.

It localises to the cytoplasm. The catalysed reaction is a 3'-end 3'-phospho-ribonucleotide-RNA + ATP = a 3'-end 2',3'-cyclophospho-ribonucleotide-RNA + AMP + diphosphate. In terms of biological role, catalyzes the conversion of 3'-phosphate to a 2',3'-cyclic phosphodiester at the end of RNA. The mechanism of action of the enzyme occurs in 3 steps: (A) adenylation of the enzyme by ATP; (B) transfer of adenylate to an RNA-N3'P to produce RNA-N3'PP5'A; (C) and attack of the adjacent 2'-hydroxyl on the 3'-phosphorus in the diester linkage to produce the cyclic end product. The biological role of this enzyme is unknown but it is likely to function in some aspects of cellular RNA processing. This chain is RNA 3'-terminal phosphate cyclase, found in Staphylothermus marinus (strain ATCC 43588 / DSM 3639 / JCM 9404 / F1).